A 540-amino-acid polypeptide reads, in one-letter code: Peptide chain release factor 3 (540 aa).

The 270-residue stretch at 14–283 folds into the tr-type G domain; the sequence is NQRRNFAIIS…AFLDYALKPI (270 aa). Residues 23 to 30, 91 to 95, and 145 to 148 contribute to the GTP site; these read SHPDAGKT, DTPGH, and NKLD.

Belongs to the TRAFAC class translation factor GTPase superfamily. Classic translation factor GTPase family. PrfC subfamily.

Its subcellular location is the cytoplasm. In terms of biological role, increases the formation of ribosomal termination complexes and stimulates activities of RF-1 and RF-2. It binds guanine nucleotides and has strong preference for UGA stop codons. It may interact directly with the ribosome. The stimulation of RF-1 and RF-2 is significantly reduced by GTP and GDP, but not by GMP. This chain is Peptide chain release factor 3, found in Gloeothece citriformis (strain PCC 7424) (Cyanothece sp. (strain PCC 7424)).